The following is an 843-amino-acid chain: Protein P (843 aa).

Residues 1–177 are terminal protein domain (TP); sequence MPLSYQHFRK…FCGSPYSWEQ (177 aa). Positions 178–346 are spacer; it reads DLQHGRLVFQ…YCLCHIVNLI (169 aa). Disordered stretches follow at residues 220–258 and 292–319; these read KSRLGPQPPQGQLAGRPQGGSGSIRARVHPSPWGTVGVE and SKGHSSSGRAVELHHFPPNSSRSQSQGS. The span at 308–319 shows a compositional bias: low complexity; it reads PPNSSRSQSQGS. The interval 347–690 is polymerase/reverse transcriptase domain (RT); that stretch reads DDWGPCAEHG…YLNLYPVARQ (344 aa). The region spanning 357–600 is the Reverse transcriptase domain; sequence EHRIRTPRTP…YSLNFMGYVI (244 aa). 3 residues coordinate Mg(2+): aspartate 429, aspartate 551, and aspartate 552.

The protein belongs to the hepadnaviridae P protein family.

The catalysed reaction is DNA(n) + a 2'-deoxyribonucleoside 5'-triphosphate = DNA(n+1) + diphosphate. It carries out the reaction Endonucleolytic cleavage to 5'-phosphomonoester.. Its activity is regulated as follows. Activated by host HSP70 and HSP40 in vitro to be able to bind the epsilon loop of the pgRNA. Because deletion of the RNase H region renders the protein partly chaperone-independent, the chaperones may be needed indirectly to relieve occlusion of the RNA-binding site by this domain. Inhibited by several reverse-transcriptase inhibitors: Lamivudine, Adefovir and Entecavir. Functionally, multifunctional enzyme that converts the viral RNA genome into dsDNA in viral cytoplasmic capsids. This enzyme displays a DNA polymerase activity that can copy either DNA or RNA templates, and a ribonuclease H (RNase H) activity that cleaves the RNA strand of RNA-DNA heteroduplexes in a partially processive 3'- to 5'-endonucleasic mode. Neo-synthesized pregenomic RNA (pgRNA) are encapsidated together with the P protein, and reverse-transcribed inside the nucleocapsid. Initiation of reverse-transcription occurs first by binding the epsilon loop on the pgRNA genome, and is initiated by protein priming, thereby the 5'-end of (-)DNA is covalently linked to P protein. Partial (+)DNA is synthesized from the (-)DNA template and generates the relaxed circular DNA (RC-DNA) genome. After budding and infection, the RC-DNA migrates in the nucleus, and is converted into a plasmid-like covalently closed circular DNA (cccDNA). The activity of P protein does not seem to be necessary for cccDNA generation, and is presumably released from (+)DNA by host nuclear DNA repair machinery. This is Protein P from Hepatitis B virus genotype B1 (isolate Japan/Yamagata-2/1998) (HBV-B).